Here is a 447-residue protein sequence, read N- to C-terminus: Pentatricopeptide repeat-containing protein At3g53170 (447 aa).

10 PPR repeats span residues 93-127 (RCKTYTKLFKVLGNCKQPDQASLLFEVMLSEGLKP), 128-158 (TIDVYTSLISVYGKSELLDKAFSTLEYMKSV), 164-198 (DVFTFTVLISCCCKLGRFDLVKSIVLEMSYLGVGC), 199-233 (STVTYNTIIDGYGKAGMFEEMESVLADMIEDGDSL), 235-269 (DVCTLNSIIGSYGNGRNMRKMESWYSRFQLMGVQP), 270-304 (DITTFNILILSFGKAGMYKKMCSVMDFMEKRFFSL), 305-339 (TTVTYNIVIETFGKAGRIEKMDDVFRKMKYQGVKP), 340-374 (NSITYCSLVNAYSKAGLVVKIDSVLRQIVNSDVVL), 375-409 (DTPFFNCIINAYGQAGDLATMKELYIQMEERKCKP), and 410-444 (DKITFATMIKTYTAHGIFDAVQELEKQMISSGENL).

This sequence belongs to the PPR family. P subfamily.

The polypeptide is Pentatricopeptide repeat-containing protein At3g53170 (Arabidopsis thaliana (Mouse-ear cress)).